The following is a 242-amino-acid chain: Methylthioribulose-1-phosphate dehydratase (242 aa).

A Phosphoserine modification is found at S87. C97 is a binding site for substrate. The Zn(2+) site is built by H115 and H117. The active-site Proton donor/acceptor is the E139. Zn(2+) is bound at residue H195.

It belongs to the aldolase class II family. MtnB subfamily. In terms of assembly, homotetramer. Interacts with APAF1. May interact with CASP1. Zn(2+) serves as cofactor. In terms of tissue distribution, isoform 1 is ubiquitously expressed. Isoform 2 is expressed at lower levels and detected in heart, brain, pancreas, liver, placenta, skeletal muscle and kidney.

The protein localises to the cytoplasm. The enzyme catalyses 5-(methylsulfanyl)-D-ribulose 1-phosphate = 5-methylsulfanyl-2,3-dioxopentyl phosphate + H2O. It participates in amino-acid biosynthesis; L-methionine biosynthesis via salvage pathway; L-methionine from S-methyl-5-thio-alpha-D-ribose 1-phosphate: step 2/6. Its function is as follows. Catalyzes the dehydration of methylthioribulose-1-phosphate (MTRu-1-P) into 2,3-diketo-5-methylthiopentyl-1-phosphate (DK-MTP-1-P). Functions in the methionine salvage pathway, which plays a key role in cancer, apoptosis, microbial proliferation and inflammation. May inhibit the CASP1-related inflammatory response (pyroptosis), the CASP9-dependent apoptotic pathway and the cytochrome c-dependent and APAF1-mediated cell death. This Homo sapiens (Human) protein is Methylthioribulose-1-phosphate dehydratase.